Reading from the N-terminus, the 78-residue chain is MATGTPAAELRELTEEELVTRLRESKEELFNLRFQMATGQMDNNRRLRTVRHEIARIYTVLRERELGLAVGPDAGDAA.

This sequence belongs to the universal ribosomal protein uL29 family.

The polypeptide is Large ribosomal subunit protein uL29 (Rhodococcus opacus (strain B4)).